The following is a 158-amino-acid chain: NAD(P)H-quinone oxidoreductase subunit J, chloroplastic (158 aa).

Belongs to the complex I 30 kDa subunit family. In terms of assembly, NDH is composed of at least 16 different subunits, 5 of which are encoded in the nucleus.

It localises to the plastid. Its subcellular location is the chloroplast thylakoid membrane. The enzyme catalyses a plastoquinone + NADH + (n+1) H(+)(in) = a plastoquinol + NAD(+) + n H(+)(out). It carries out the reaction a plastoquinone + NADPH + (n+1) H(+)(in) = a plastoquinol + NADP(+) + n H(+)(out). Functionally, NDH shuttles electrons from NAD(P)H:plastoquinone, via FMN and iron-sulfur (Fe-S) centers, to quinones in the photosynthetic chain and possibly in a chloroplast respiratory chain. The immediate electron acceptor for the enzyme in this species is believed to be plastoquinone. Couples the redox reaction to proton translocation, and thus conserves the redox energy in a proton gradient. The protein is NAD(P)H-quinone oxidoreductase subunit J, chloroplastic of Illicium oligandrum (Star anise).